A 507-amino-acid chain; its full sequence is ATP synthase subunit alpha (507 aa).

An ATP-binding site is contributed by 168–175 (GDRQTGKT).

It belongs to the ATPase alpha/beta chains family. As to quaternary structure, F-type ATPases have 2 components, CF(1) - the catalytic core - and CF(0) - the membrane proton channel. CF(1) has five subunits: alpha(3), beta(3), gamma(1), delta(1), epsilon(1). CF(0) has three main subunits: a(1), b(2) and c(9-12). The alpha and beta chains form an alternating ring which encloses part of the gamma chain. CF(1) is attached to CF(0) by a central stalk formed by the gamma and epsilon chains, while a peripheral stalk is formed by the delta and b chains.

Its subcellular location is the cell membrane. The catalysed reaction is ATP + H2O + 4 H(+)(in) = ADP + phosphate + 5 H(+)(out). Its function is as follows. Produces ATP from ADP in the presence of a proton gradient across the membrane. The alpha chain is a regulatory subunit. In Mesomycoplasma hyopneumoniae (strain 7448) (Mycoplasma hyopneumoniae), this protein is ATP synthase subunit alpha.